The following is a 73-amino-acid chain: Kappa-scoloptoxin SsmTx-I (73 aa).

An N-terminal signal peptide occupies residues 1–25 (MMMMFSVVSVFLMLLLLKFHDLSMG). A propeptide spanning residues 26–37 (EEISLLKKVVRR) is cleaved from the precursor. 2 disulfide bridges follow: Cys45/Cys56 and Cys50/Cys63.

Belongs to the scoloptoxin-04 family. Expressed by the venom gland.

It localises to the secreted. Its function is as follows. Exhibits highly specific blockage of Kv2.1/KCNB1 (IC(50)=41.7 nM) voltage-gated potassium channels. This blockage is not associated with a significant change in steady-state activation, suggesting that this toxin acts as a channel blocker rather than a gating-modifier. Shows potential analgesic activities in formalin-induced paw licking, thermal pain, and acetic acid-induced abdominal writhing mice models. The sequence is that of Kappa-scoloptoxin SsmTx-I from Scolopendra mutilans (Chinese red-headed centipede).